A 161-amino-acid polypeptide reads, in one-letter code: Cyclic pyranopterin monophosphate synthase (161 aa).

Substrate-binding positions include 75–77 (LCH) and 113–114 (ME). The active site involves Asp128.

Belongs to the MoaC family. Homohexamer; trimer of dimers.

The catalysed reaction is (8S)-3',8-cyclo-7,8-dihydroguanosine 5'-triphosphate = cyclic pyranopterin phosphate + diphosphate. Its pathway is cofactor biosynthesis; molybdopterin biosynthesis. Functionally, catalyzes the conversion of (8S)-3',8-cyclo-7,8-dihydroguanosine 5'-triphosphate to cyclic pyranopterin monophosphate (cPMP). The sequence is that of Cyclic pyranopterin monophosphate synthase from Shigella sonnei (strain Ss046).